The chain runs to 526 residues: 4-alpha-glucanotransferase (526 aa).

Belongs to the disproportionating enzyme family.

The protein localises to the cytoplasm. It carries out the reaction Transfers a segment of a (1-&gt;4)-alpha-D-glucan to a new position in an acceptor, which may be glucose or a (1-&gt;4)-alpha-D-glucan.. The polypeptide is 4-alpha-glucanotransferase (malQ) (Chlamydia pneumoniae (Chlamydophila pneumoniae)).